A 257-amino-acid chain; its full sequence is Transmembrane protein 101 (257 aa).

8 helical membrane-spanning segments follow: residues 21–40 (VLLT…LYAE), 52–72 (VPYL…MSFG), 77–97 (WFAL…YIGG), 110–130 (YSRT…AGEL), 139–159 (SLQS…AYSL), 182–202 (LFFV…YVTL), 206–226 (ILAV…AYWH), and 233–253 (FWNQ…AVIL).

It is found in the membrane. May activate NF-kappa-B signaling pathways. The sequence is that of Transmembrane protein 101 (TMEM101) from Homo sapiens (Human).